The primary structure comprises 263 residues: Phosphate import ATP-binding protein PstB (263 aa).

In terms of domain architecture, ABC transporter spans 17–258 (IDVRDLNFYY…PRRKETEDYI (242 aa)). 49–56 (GPSGCGKS) is an ATP binding site.

It belongs to the ABC transporter superfamily. Phosphate importer (TC 3.A.1.7) family. The complex is composed of two ATP-binding proteins (PstB), two transmembrane proteins (PstC and PstA) and a solute-binding protein (PstS).

It localises to the cell inner membrane. It catalyses the reaction phosphate(out) + ATP + H2O = ADP + 2 phosphate(in) + H(+). In terms of biological role, part of the ABC transporter complex PstSACB involved in phosphate import. Responsible for energy coupling to the transport system. The protein is Phosphate import ATP-binding protein PstB of Ralstonia nicotianae (strain ATCC BAA-1114 / GMI1000) (Ralstonia solanacearum).